The chain runs to 196 residues: HTH-type transcriptional regulator EcpR (196 aa).

Residues 138 to 196 form the HTH luxR-type domain; sequence KDIKKDKITDREMEIIRMTAQGMQPKSIARIENCSVKTVYTHRRNAEAKLYSKIYKLVQ. Residues 162–181 constitute a DNA-binding region (H-T-H motif); that stretch reads PKSIARIENCSVKTVYTHRR.

It belongs to the EcpR/MatA family.

It is found in the cytoplasm. Its function is as follows. Part of the ecpRABCDE operon, which encodes the E.coli common pilus (ECP). ECP is found in both commensal and pathogenic strains and plays a dual role in early-stage biofilm development and host cell recognition. Positively regulates the expression of the ecp operon. The protein is HTH-type transcriptional regulator EcpR (ecpR) of Escherichia coli O139:H28 (strain E24377A / ETEC).